We begin with the raw amino-acid sequence, 395 residues long: Endophilin-B2 (395 aa).

M1 carries the N-acetylmethionine modification. The segment at 1–27 (MDFNMKKLASDAGIFFTRAVQFTEEKF) is membrane-binding amphipathic helix. S10 bears the Phosphoserine mark. The BAR domain maps to 24-287 (EEKFGQAEKT…LGRFPGTFVG (264 aa)). Coiled coils occupy residues 116–132 (IKVA…ERDF) and 206–240 (ASAL…LLLE). The SH3 domain occupies 335 to 395 (SGTRKARVLY…VPVTYLELLS (61 aa)). S395 is modified (phosphoserine).

It belongs to the endophilin family. As to quaternary structure, homodimer, and heterodimer with SH3GLB1. As to expression, detected in skeletal muscle, adipocyte, brain, lung, colon and mammary gland.

It is found in the cytoplasm. This is Endophilin-B2 (SH3GLB2) from Homo sapiens (Human).